Consider the following 842-residue polypeptide: Translation initiation factor IF-2 (842 aa).

The interval 94–259 (QRSPEEIQAE…HGFQNPTGPV (166 aa)) is disordered. The span at 96-138 (SPEEIQAEQKRELDERRAAENAARDKVEAEVRQRNEEQARRQA) shows a compositional bias: basic and acidic residues. Positions 139–148 (ADSAVAAPAP) are enriched in low complexity. Residues 149 to 159 (AAKPEPAPAAA) show a composition bias toward pro residues. Residues 160 to 172 (PAPVVADAPASED) show a composition bias toward low complexity. 2 stretches are compositionally biased toward basic and acidic residues: residues 173–202 (AAAR…RGEA) and 226–235 (TTDEESDGAR). Over residues 236–249 (RGRGGKGKLKKRNQ) the composition is skewed to basic residues. The region spanning 342-509 (SRAPVVTVMG…AVLLQAEILE (168 aa)) is the tr-type G domain. Residues 351–358 (GHVDHGKT) are G1. 351 to 358 (GHVDHGKT) provides a ligand contact to GTP. A G2 region spans residues 376 to 380 (GITQH). The tract at residues 397–400 (DTPG) is G3. Residues 397 to 401 (DTPGH) and 451 to 454 (NKID) contribute to the GTP site. The tract at residues 451–454 (NKID) is G4. Residues 487–489 (SAK) form a G5 region.

This sequence belongs to the TRAFAC class translation factor GTPase superfamily. Classic translation factor GTPase family. IF-2 subfamily.

Its subcellular location is the cytoplasm. In terms of biological role, one of the essential components for the initiation of protein synthesis. Protects formylmethionyl-tRNA from spontaneous hydrolysis and promotes its binding to the 30S ribosomal subunits. Also involved in the hydrolysis of GTP during the formation of the 70S ribosomal complex. This Pseudomonas putida (strain GB-1) protein is Translation initiation factor IF-2.